The following is a 315-amino-acid chain: N-acetyl-gamma-glutamyl-phosphate reductase (315 aa).

Residue cysteine 117 is part of the active site.

It belongs to the NAGSA dehydrogenase family. Type 2 subfamily.

The protein resides in the cytoplasm. The catalysed reaction is N-acetyl-L-glutamate 5-semialdehyde + phosphate + NADP(+) = N-acetyl-L-glutamyl 5-phosphate + NADPH + H(+). Its pathway is amino-acid biosynthesis; L-arginine biosynthesis; N(2)-acetyl-L-ornithine from L-glutamate: step 3/4. Functionally, catalyzes the NADPH-dependent reduction of N-acetyl-5-glutamyl phosphate to yield N-acetyl-L-glutamate 5-semialdehyde. This Burkholderia ambifaria (strain ATCC BAA-244 / DSM 16087 / CCUG 44356 / LMG 19182 / AMMD) (Burkholderia cepacia (strain AMMD)) protein is N-acetyl-gamma-glutamyl-phosphate reductase.